Reading from the N-terminus, the 422-residue chain is Synaptotagmin-1 (422 aa).

At 1–57 the chain is on the vesicular side; sequence MVSESHHEALAAPPVTTVATVLPSNATEPASPGEGKEDAFSKLKEKFMNELHKIPLP. Asparagine 25 carries an N-linked (GlcNAc...) asparagine glycan. Residues 58 to 80 form a helical membrane-spanning segment; that stretch reads PWALIAIAIVAVLLVLTCCFCIC. 5 S-palmitoyl cysteine lipidation sites follow: cysteine 75, cysteine 76, cysteine 78, cysteine 80, and cysteine 83. Over 81–422 the chain is Cytoplasmic; that stretch reads KKCLFKKKNK…EVDAMLAVKK (342 aa). The disordered stretch occupies residues 113–142; the sequence is TMKDQALKDDDAETGLTDGEEKEEPKEEEK. Acidic residues predominate over residues 122-134; it reads DDAETGLTDGEEK. Threonine 129 is modified (phosphothreonine). A phospholipid binding region spans residues 136–382; sequence EPKEEEKLGK…AIGKVFVGYN (247 aa). Residues 142–261 form the C2 1 domain; sequence KLGKLQYSLD…DFGHVTEEWR (120 aa). 3 residues coordinate Ca(2+): leucine 172, aspartate 173, and aspartate 179. Tyrosine 230 carries the post-translational modification Phosphotyrosine. Positions 231, 232, 233, 236, 237, and 239 each coordinate Ca(2+). Serine 265 carries the phosphoserine modification. The C2 2 domain occupies 273–406; that stretch reads KLGDICFSLR…NPRRPIAQWH (134 aa). The Ca(2+) site is built by aspartate 304 and aspartate 310. Phosphoserine is present on residues serine 343 and serine 345. Ca(2+)-binding residues include aspartate 364, aspartate 366, and aspartate 372.

The protein belongs to the synaptotagmin family. As to quaternary structure, homotetramer. Heterodimer; heterodimerizes with SYT2 in presence of calcium. Interacts with SCAMP5. Interacts with STON2. Forms a complex with SV2B, syntaxin 1 and SNAP25. Interacts with SV2A, SV2B and SV2C. Interacts with RIMS1. Interacts with PRRT2. Interacts with DNAJC5 in a phosphorylation-dependent manner. Interacts (via N-terminus) with RAB3A. Interacts with SYT12. Interacts with calmodulin. Interacts with DNM1 (via C-terminal proline-rich domain (PRD)); this interaction facilitates vesicle fission during clathrin-mediated endocytosis (CME). It depends on Ca(2+) as a cofactor. In terms of processing, glycosylated. Expressed in melanocytes.

It is found in the cytoplasmic vesicle. Its subcellular location is the secretory vesicle membrane. It localises to the secretory vesicle. The protein resides in the synaptic vesicle membrane. The protein localises to the chromaffin granule membrane. It is found in the cytoplasm. Calcium sensor that participates in triggering neurotransmitter release at the synapse. May have a regulatory role in the membrane interactions during trafficking of synaptic vesicles at the active zone of the synapse. It binds acidic phospholipids with a specificity that requires the presence of both an acidic head group and a diacyl backbone. A Ca(2+)-dependent interaction between synaptotagmin and putative receptors for activated protein kinase C has also been reported. It can bind to at least three additional proteins in a Ca(2+)-independent manner; these are neurexins, syntaxin and AP2. Plays a role in dendrite formation by melanocytes. The protein is Synaptotagmin-1 of Homo sapiens (Human).